The primary structure comprises 344 residues: uncharacterized protein (344 aa).

Residues 1 to 19 (MRIIFYLTLLLFIFNKVKS) form the signal peptide. Residues 323–344 (SATRNQISIMVLILSVLLVLIL) constitute a propeptide, removed in mature form.

It is found in the cell membrane. This is an uncharacterized protein from Dictyostelium discoideum (Social amoeba).